The following is a 511-amino-acid chain: Histidine ammonia-lyase (511 aa).

The 5-imidazolinone (Ala-Gly) cross-link spans 142 to 144 (ASG). Serine 143 carries the 2,3-didehydroalanine (Ser) modification.

This sequence belongs to the PAL/histidase family. Contains an active site 4-methylidene-imidazol-5-one (MIO), which is formed autocatalytically by cyclization and dehydration of residues Ala-Ser-Gly.

The protein resides in the cytoplasm. The catalysed reaction is L-histidine = trans-urocanate + NH4(+). The protein operates within amino-acid degradation; L-histidine degradation into L-glutamate; N-formimidoyl-L-glutamate from L-histidine: step 1/3. The polypeptide is Histidine ammonia-lyase (Caulobacter sp. (strain K31)).